The following is a 426-amino-acid chain: Monocarboxylate transporter 13 (426 aa).

Residues 1–10 (MAYRAEPPDG) are Cytoplasmic-facing. The next 12 membrane-spanning stretches (helical) occupy residues 11-31 (GWGW…FGVL), 52-72 (VSWI…VGSA), 83-103 (VMTG…ATSL), 106-126 (LYLS…TPTL), 139-159 (LAMG…APLF), 172-192 (LLLV…LRPL), 221-241 (VALT…VAHL), 244-264 (LGWD…SDLV), 283-303 (LLML…VAEA), 306-326 (GLVA…PVAF), 338-358 (IYCG…LGAP), and 374-394 (FVVA…LPHF). Residues 395–426 (FCFSAPTSKPQDLVTEALDTKVPLPEEGLGED) lie on the Cytoplasmic side of the membrane.

The protein belongs to the major facilitator superfamily. Monocarboxylate porter (TC 2.A.1.13) family.

The protein localises to the golgi apparatus membrane. The protein resides in the cell membrane. Functionally, proton-linked monocarboxylate transporter. May catalyze the transport of monocarboxylates across the plasma membrane. The chain is Monocarboxylate transporter 13 (SLC16A13) from Bos taurus (Bovine).